The primary structure comprises 343 residues: E3 ubiquitin-protein ligase RNF113A (343 aa).

Residue A2 is modified to N-acetylalanine. Positions 2-60 (AEQLSPGKTTDQVCTFLFKKPGRKVAAGRRKRPICNQESGDSSSSSDEGNTVVRPEKKR) are important for interaction with SNRNP200/BRR2. Phosphoserine is present on S6. A compositionally biased stretch (basic residues) spans 23–34 (GRKVAAGRRKRP). The tract at residues 23–95 (GRKVAAGRRK…EEEEENKSES (73 aa)) is disordered. Residues 39–50 (ESGDSSSSSDEG) show a composition bias toward low complexity. The segment at 50-61 (GNTVVRPEKKRA) is important for interaction with CXCR4. Phosphoserine occurs at positions 84 and 85. The segment at 196–224 (DYQPDICKDYKETGFCGFGDSCKFLHDRS) adopts a C3H1-type zinc-finger fold. Phosphoserine is present on S253. The RING-type zinc-finger motif lies at 262 to 300 (CFICRQTFQNPVVTKCRHYFCESCALQHFRTTPRCYVCD). Residues 323–343 (AEGGGASGFPEDPDEDPVPIT) form a disordered region. A compositionally biased stretch (acidic residues) spans 333-343 (EDPDEDPVPIT).

As to quaternary structure, component of pre-catalytic and catalytic spliceosome complexes. Interacts (via N-terminus) with the spliceosome subunit SNRNP200/BRR2. Component of the minor spliceosome. Within this complex, interacts with SCNM1 and CRIPT.

Its subcellular location is the nucleus. It localises to the nucleus speckle. It catalyses the reaction S-ubiquitinyl-[E2 ubiquitin-conjugating enzyme]-L-cysteine + [acceptor protein]-L-lysine = [E2 ubiquitin-conjugating enzyme]-L-cysteine + N(6)-ubiquitinyl-[acceptor protein]-L-lysine.. It functions in the pathway protein modification; protein ubiquitination. Functionally, required for pre-mRNA splicing as component of the spliceosome. As a component of the minor spliceosome, involved in the splicing of U12-type introns in pre-mRNAs. E3 ubiquitin-protein ligase that catalyzes the transfer of ubiquitin onto target proteins. Catalyzes polyubiquitination of SNRNP200/BRR2 with non-canonical 'Lys-63'-linked polyubiquitin chains. Plays a role in DNA repair via its role in the synthesis of 'Lys-63'-linked polyubiquitin chains that recruit ALKBH3 and the ASCC complex to sites of DNA damage by alkylating agents. Ubiquitinates CXCR4, leading to its degradation, and thereby contributes to the termination of CXCR4 signaling. The polypeptide is E3 ubiquitin-protein ligase RNF113A (RNF113A) (Bos taurus (Bovine)).